A 301-amino-acid chain; its full sequence is Sulfate adenylyltransferase subunit 2 (301 aa).

This sequence belongs to the PAPS reductase family. CysD subfamily. Heterodimer composed of CysD, the smaller subunit, and CysN.

It carries out the reaction sulfate + ATP + H(+) = adenosine 5'-phosphosulfate + diphosphate. It participates in sulfur metabolism; hydrogen sulfide biosynthesis; sulfite from sulfate: step 1/3. Functionally, with CysN forms the ATP sulfurylase (ATPS) that catalyzes the adenylation of sulfate producing adenosine 5'-phosphosulfate (APS) and diphosphate, the first enzymatic step in sulfur assimilation pathway. APS synthesis involves the formation of a high-energy phosphoric-sulfuric acid anhydride bond driven by GTP hydrolysis by CysN coupled to ATP hydrolysis by CysD. This chain is Sulfate adenylyltransferase subunit 2, found in Shewanella loihica (strain ATCC BAA-1088 / PV-4).